The primary structure comprises 367 residues: Heme A synthase (367 aa).

5 helical membrane-spanning segments follow: residues 26 to 46 (IRGWLAVVLFALFALVIVGGA), 111 to 131 (LLARSIGVIFALPLLFFWLTG), 139 to 159 (LPLLGILALGGFQGFIGWWMV), 174 to 194 (LATHLVIACLIFAACMWIYRG), and 212 to 232 (AGIIAAMSLFQIYLGALVAGL). H274 provides a ligand contact to heme. Transmembrane regions (helical) follow at residues 276 to 296 (AGAYLLFALAFAHMVVSLRAA), 305 to 325 (SVLLFVLLTVQAAIGITTLLL), and 327 to 347 (VPIVWGVLHQAGALVVLGFAI). H335 contributes to the heme binding site.

Belongs to the COX15/CtaA family. Type 2 subfamily. As to quaternary structure, interacts with CtaB. Heme b serves as cofactor.

It localises to the cell membrane. It catalyses the reaction Fe(II)-heme o + 2 A + H2O = Fe(II)-heme a + 2 AH2. Its pathway is porphyrin-containing compound metabolism; heme A biosynthesis; heme A from heme O: step 1/1. Catalyzes the conversion of heme O to heme A by two successive hydroxylations of the methyl group at C8. The first hydroxylation forms heme I, the second hydroxylation results in an unstable dihydroxymethyl group, which spontaneously dehydrates, resulting in the formyl group of heme A. The sequence is that of Heme A synthase from Sinorhizobium fredii (strain NBRC 101917 / NGR234).